Here is a 275-residue protein sequence, read N- to C-terminus: Dermonecrotic toxin LarSicTox-alphaIII1 (275 aa).

His5 is a catalytic residue. Residues Glu25 and Asp27 each contribute to the Mg(2+) site. His41 serves as the catalytic Nucleophile. 2 disulfide bridges follow: Cys45/Cys51 and Cys47/Cys190. Residue Asp85 coordinates Mg(2+). Asn252 carries N-linked (GlcNAc...) asparagine glycosylation.

Belongs to the arthropod phospholipase D family. Class II subfamily. Mg(2+) is required as a cofactor. Expressed by the venom gland.

The protein localises to the secreted. It carries out the reaction an N-(acyl)-sphingosylphosphocholine = an N-(acyl)-sphingosyl-1,3-cyclic phosphate + choline. The catalysed reaction is an N-(acyl)-sphingosylphosphoethanolamine = an N-(acyl)-sphingosyl-1,3-cyclic phosphate + ethanolamine. The enzyme catalyses a 1-acyl-sn-glycero-3-phosphocholine = a 1-acyl-sn-glycero-2,3-cyclic phosphate + choline. It catalyses the reaction a 1-acyl-sn-glycero-3-phosphoethanolamine = a 1-acyl-sn-glycero-2,3-cyclic phosphate + ethanolamine. In terms of biological role, dermonecrotic toxins cleave the phosphodiester linkage between the phosphate and headgroup of certain phospholipids (sphingolipid and lysolipid substrates), forming an alcohol (often choline) and a cyclic phosphate. This toxin acts on sphingomyelin (SM). It may also act on ceramide phosphoethanolamine (CPE), lysophosphatidylcholine (LPC) and lysophosphatidylethanolamine (LPE), but not on lysophosphatidylserine (LPS), and lysophosphatidylglycerol (LPG). It acts by transphosphatidylation, releasing exclusively cyclic phosphate products as second products. Induces dermonecrosis, hemolysis, increased vascular permeability, edema, inflammatory response, and platelet aggregation. This chain is Dermonecrotic toxin LarSicTox-alphaIII1, found in Loxosceles arizonica (Arizona brown spider).